The following is a 364-amino-acid chain: Cobalt-precorrin-5B C(1)-methyltransferase (364 aa).

The protein belongs to the CbiD family.

It carries out the reaction Co-precorrin-5B + S-adenosyl-L-methionine = Co-precorrin-6A + S-adenosyl-L-homocysteine. It participates in cofactor biosynthesis; adenosylcobalamin biosynthesis; cob(II)yrinate a,c-diamide from sirohydrochlorin (anaerobic route): step 6/10. Functionally, catalyzes the methylation of C-1 in cobalt-precorrin-5B to form cobalt-precorrin-6A. The sequence is that of Cobalt-precorrin-5B C(1)-methyltransferase from Pseudomonas putida (strain GB-1).